A 216-amino-acid polypeptide reads, in one-letter code: Imidazole glycerol phosphate synthase subunit HisH (216 aa).

The Glutamine amidotransferase type-1 domain occupies 2-216 (RVAIIDYGSG…LIANFLKWKP (215 aa)). C88 acts as the Nucleophile in catalysis. Active-site residues include H196 and E198.

As to quaternary structure, heterodimer of HisH and HisF.

It localises to the cytoplasm. It carries out the reaction 5-[(5-phospho-1-deoxy-D-ribulos-1-ylimino)methylamino]-1-(5-phospho-beta-D-ribosyl)imidazole-4-carboxamide + L-glutamine = D-erythro-1-(imidazol-4-yl)glycerol 3-phosphate + 5-amino-1-(5-phospho-beta-D-ribosyl)imidazole-4-carboxamide + L-glutamate + H(+). It catalyses the reaction L-glutamine + H2O = L-glutamate + NH4(+). Its pathway is amino-acid biosynthesis; L-histidine biosynthesis; L-histidine from 5-phospho-alpha-D-ribose 1-diphosphate: step 5/9. Its function is as follows. IGPS catalyzes the conversion of PRFAR and glutamine to IGP, AICAR and glutamate. The HisH subunit catalyzes the hydrolysis of glutamine to glutamate and ammonia as part of the synthesis of IGP and AICAR. The resulting ammonia molecule is channeled to the active site of HisF. The sequence is that of Imidazole glycerol phosphate synthase subunit HisH from Brucella suis biovar 1 (strain 1330).